The sequence spans 193 residues: Potassium-transporting ATPase KdpC subunit (193 aa).

Residues 7–27 (PLVVLFVVLNAVTGLAYPAVM) traverse the membrane as a helical segment.

It belongs to the KdpC family. In terms of assembly, the system is composed of three essential subunits: KdpA, KdpB and KdpC.

The protein localises to the cell inner membrane. In terms of biological role, part of the high-affinity ATP-driven potassium transport (or Kdp) system, which catalyzes the hydrolysis of ATP coupled with the electrogenic transport of potassium into the cytoplasm. This subunit acts as a catalytic chaperone that increases the ATP-binding affinity of the ATP-hydrolyzing subunit KdpB by the formation of a transient KdpB/KdpC/ATP ternary complex. The polypeptide is Potassium-transporting ATPase KdpC subunit (Burkholderia cenocepacia (strain HI2424)).